A 412-amino-acid polypeptide reads, in one-letter code: Inactive serine protease 35 (412 aa).

Residues 1-23 (MGAMFFGLMLFTLGWTLIDGSES) form the signal peptide. Residue Asn-110 is glycosylated (N-linked (GlcNAc...) asparagine). Residues 124-407 (VYGTDSRFSI…ICLWMHGDDA (284 aa)) enclose the Peptidase S1 domain. Cysteines 154 and 170 form a disulfide. A compositionally biased stretch (basic residues) spans 192-207 (RNKGGGKRRRGSRRNR). Positions 192–246 (RNKGGGKRRRGSRRNRREVSGAGREGSQDSLKETAKAGRRRKGSARRQRAADGRP) are disordered. A compositionally biased stretch (basic and acidic residues) spans 217-227 (GSQDSLKETAK). Basic residues predominate over residues 228-239 (AGRRRKGSARRQ).

This sequence belongs to the peptidase S1 family.

The protein resides in the secreted. In Bos taurus (Bovine), this protein is Inactive serine protease 35 (PRSS35).